The primary structure comprises 130 residues: Small ribosomal subunit protein uS11 (130 aa).

Positions 109 to 130 (EDITPIPHDGTGRPGGKRGRRV) are disordered.

The protein belongs to the universal ribosomal protein uS11 family. Part of the 30S ribosomal subunit.

Located on the platform of the 30S subunit. In Methanobrevibacter smithii (strain ATCC 35061 / DSM 861 / OCM 144 / PS), this protein is Small ribosomal subunit protein uS11.